A 323-amino-acid chain; its full sequence is Cytochrome c biogenesis protein CcsA (323 aa).

8 helical membrane passes run 18–38 (VSVV…VGLY), 43–63 (KGML…WVYW), 71–91 (LYES…IPSF), 99–119 (LNVI…SGLL), 146–166 (LGYA…IIIF), 227–247 (VISL…VWAN), 256–276 (WDPK…YLHI), and 288–308 (AIVA…VNLL).

This sequence belongs to the CcmF/CycK/Ccl1/NrfE/CcsA family. In terms of assembly, may interact with Ccs1.

The protein localises to the plastid. Its subcellular location is the chloroplast thylakoid membrane. Required during biogenesis of c-type cytochromes (cytochrome c6 and cytochrome f) at the step of heme attachment. The polypeptide is Cytochrome c biogenesis protein CcsA (Spinacia oleracea (Spinach)).